A 310-amino-acid polypeptide reads, in one-letter code: Ribosomal RNA small subunit methyltransferase H (310 aa).

S-adenosyl-L-methionine is bound by residues 32 to 34, Asp-52, Ala-83, Asp-100, and Gln-107; that span reads GGH.

It belongs to the methyltransferase superfamily. RsmH family.

The protein resides in the cytoplasm. The enzyme catalyses cytidine(1402) in 16S rRNA + S-adenosyl-L-methionine = N(4)-methylcytidine(1402) in 16S rRNA + S-adenosyl-L-homocysteine + H(+). Its function is as follows. Specifically methylates the N4 position of cytidine in position 1402 (C1402) of 16S rRNA. The polypeptide is Ribosomal RNA small subunit methyltransferase H (Geobacillus sp. (strain WCH70)).